A 427-amino-acid chain; its full sequence is tRNA(Ile)-lysidine synthase (427 aa).

18 to 23 (SGGLDS) contributes to the ATP binding site.

It belongs to the tRNA(Ile)-lysidine synthase family.

Its subcellular location is the cytoplasm. It catalyses the reaction cytidine(34) in tRNA(Ile2) + L-lysine + ATP = lysidine(34) in tRNA(Ile2) + AMP + diphosphate + H(+). Ligates lysine onto the cytidine present at position 34 of the AUA codon-specific tRNA(Ile) that contains the anticodon CAU, in an ATP-dependent manner. Cytidine is converted to lysidine, thus changing the amino acid specificity of the tRNA from methionine to isoleucine. The polypeptide is tRNA(Ile)-lysidine synthase (Pseudomonas putida (strain ATCC 47054 / DSM 6125 / CFBP 8728 / NCIMB 11950 / KT2440)).